An 81-amino-acid chain; its full sequence is MRKLALVPIQFYRYAISPLMANHCRFFPSCSCYAYEAIENHGIWRGGWLAVRRLGRCHPWNDGGYDPVPPAPSSRTSSIAE.

A disordered region spans residues 61 to 81; sequence NDGGYDPVPPAPSSRTSSIAE.

This sequence belongs to the UPF0161 family.

It localises to the cell inner membrane. Functionally, could be involved in insertion of integral membrane proteins into the membrane. In Pseudomonas putida (strain ATCC 47054 / DSM 6125 / CFBP 8728 / NCIMB 11950 / KT2440), this protein is Putative membrane protein insertion efficiency factor.